Consider the following 206-residue polypeptide: Cytidylate kinase (206 aa).

Residue 9 to 17 coordinates ATP; sequence GPAAAGKGT.

The protein belongs to the cytidylate kinase family. Type 1 subfamily.

The protein resides in the cytoplasm. The enzyme catalyses CMP + ATP = CDP + ADP. The catalysed reaction is dCMP + ATP = dCDP + ADP. This chain is Cytidylate kinase, found in Cereibacter sphaeroides (strain ATCC 17023 / DSM 158 / JCM 6121 / CCUG 31486 / LMG 2827 / NBRC 12203 / NCIMB 8253 / ATH 2.4.1.) (Rhodobacter sphaeroides).